A 551-amino-acid chain; its full sequence is Histone-lysine N-methyltransferase SETDB2 (551 aa).

Residues 146-210 (LLGHNPLRAP…DRFSFSTQVC (65 aa)) enclose the MBD domain. The Pre-SET domain occupies 269–329 (VCCDCTDGCT…RCENRVVQKG (61 aa)). Zn(2+) contacts are provided by Cys-271, Cys-273, Cys-277, Cys-283, Cys-285, Cys-310, Cys-314, Cys-316, and Cys-321. The SET domain occupies 332 to 537 (VRLQVFRTPE…AGTELTWSCT (206 aa)). 342–344 (HMW) serves as a coordination point for S-adenosyl-L-methionine. The tract at residues 426-447 (SLAQRRDQQQFSISSETEDNRC) is disordered. Residues Arg-491 and 494–495 (TH) contribute to the S-adenosyl-L-methionine site.

This sequence belongs to the class V-like SAM-binding methyltransferase superfamily.

The protein localises to the nucleus. The protein resides in the chromosome. The catalysed reaction is N(6),N(6)-dimethyl-L-lysyl(9)-[histone H3] + S-adenosyl-L-methionine = N(6),N(6),N(6)-trimethyl-L-lysyl(9)-[histone H3] + S-adenosyl-L-homocysteine + H(+). In terms of biological role, histone methyltransferase involved in left-right axis specification in early development and mitosis. Specifically trimethylates 'Lys-9' of histone H3 (H3K9me3). H3K9me3 represents a specific tag for epigenetic transcriptional repression by recruiting HP1 (CBX1, CBX3 and/or CBX5) proteins to methylated histones. Contributes to H3K9me3 in both the interspersed repetitive elements and centromere-associated repeats. Plays a role in chromosome condensation and segregation during mitosis. During early development, required to specify the left-right axis by repressing expression of FGF8, leading to negatively regulate the dorsal organizer formation. This chain is Histone-lysine N-methyltransferase SETDB2 (setdb2), found in Danio rerio (Zebrafish).